A 193-amino-acid polypeptide reads, in one-letter code: ATP synthase subunit b 1 (193 aa).

Residues 9–28 (QEADHTAGETHTETGVAEGG) form a disordered region. Residues 10–20 (EADHTAGETHT) are compositionally biased toward basic and acidic residues. The chain crosses the membrane as a helical span at residues 40 to 59 (TYPSQLLWLAITFGLFYLFL).

This sequence belongs to the ATPase B chain family. As to quaternary structure, F-type ATPases have 2 components, F(1) - the catalytic core - and F(0) - the membrane proton channel. F(1) has five subunits: alpha(3), beta(3), gamma(1), delta(1), epsilon(1). F(0) has three main subunits: a(1), b(2) and c(10-14). The alpha and beta chains form an alternating ring which encloses part of the gamma chain. F(1) is attached to F(0) by a central stalk formed by the gamma and epsilon chains, while a peripheral stalk is formed by the delta and b chains.

Its subcellular location is the cell inner membrane. Functionally, f(1)F(0) ATP synthase produces ATP from ADP in the presence of a proton or sodium gradient. F-type ATPases consist of two structural domains, F(1) containing the extramembraneous catalytic core and F(0) containing the membrane proton channel, linked together by a central stalk and a peripheral stalk. During catalysis, ATP synthesis in the catalytic domain of F(1) is coupled via a rotary mechanism of the central stalk subunits to proton translocation. Component of the F(0) channel, it forms part of the peripheral stalk, linking F(1) to F(0). The sequence is that of ATP synthase subunit b 1 from Chelativorans sp. (strain BNC1).